Reading from the N-terminus, the 238-residue chain is uncharacterized protein (238 aa).

2 disordered regions span residues 1–51 (MPCT…ASCA) and 214–238 (ITVE…FPTA). A compositionally biased stretch (low complexity) spans 16 to 31 (ATWRTARPAPRRCGSC).

This is an uncharacterized protein from Streptomyces griseus.